The following is a 1077-amino-acid chain: Disheveled-associated activator of morphogenesis 1 (1077 aa).

Residue Ser-34 is modified to Phosphoserine. A GBD/FH3 domain is found at 45–420; sequence LPMPPVEELD…QIVIQNDKGQ (376 aa). Residues 437–526 adopt a coiled-coil conformation; it reads RMLVNENEVK…ELNRRAVCAA (90 aa). Disordered stretches follow at residues 457–478 and 526–596; these read KEHN…AKTQ and AVPG…PVSL. One can recognise an FH1 domain in the interval 528–599; the sequence is PGGPSPGAPG…PGAPVSLTLK (72 aa). Pro residues-rich tracts occupy residues 530-539 and 549-592; these read GPSPGAPGGP and LPPP…PPGA. An FH2 domain is found at 600 to 1008; that stretch reads KKNIPQPTNA…EERRARLEAQ (409 aa). The tract at residues 693 to 702 is actin-binding; it reads QNCNILLSRL. Residues 1007-1026 show a composition bias toward basic and acidic residues; that stretch reads AQLKEQRERERKVRKAKESS. Disordered stretches follow at residues 1007-1033 and 1056-1077; these read AQLK…GEFD and RKRI…KLNF. Residues Ser-1026 and Ser-1029 each carry the phosphoserine modification. In terms of domain architecture, DAD spans 1026 to 1057; the sequence is SEESGEFDDLVSALRSGEVFDKDLSKLKRNRK. Basic and acidic residues predominate over residues 1066–1077; it reads SSRERPITKLNF.

The protein belongs to the formin homology family. In terms of assembly, interacts with CIP4, FNBP1 and FNBP1L. Interacts with the SH3 domains of Abl, BTK, endophilin, spectrin and SRC. Binds specifically to GTP-bound CDC42 and RHOA. Interacts with INTU; INTU mediates the indirect interaction between DAAM1 and NPHP4. Interacts (via coiled coil domain) with KANK1 (via coiled coil domain). In early embryogenesis, expressed in embryonic and extraembryonic ectoderm. In later stages of gastrulation, expressed also in somites and ribs and posterior vertebrae of developing skeletal system. During organogenesis, expressed in CNS, PNS, stomach, liver and limb bud.

The protein localises to the cytoplasm. It localises to the cytoskeleton. It is found in the cilium basal body. Its function is as follows. Binds to disheveled (Dvl) and Rho, and mediates Wnt-induced Dvl-Rho complex formation. May play a role as a scaffolding protein to recruit Rho-GDP and Rho-GEF, thereby enhancing Rho-GTP formation. Can direct nucleation and elongation of new actin filaments. Involved in building functional cilia. Involved in the organization of the subapical actin network in multiciliated epithelial cells. Together with DAAM2, required for myocardial maturation and sarcomere assembly. During cell division, may regulate RHOA activation that signals spindle orientation and chromosomal segregation. This chain is Disheveled-associated activator of morphogenesis 1 (Daam1), found in Mus musculus (Mouse).